A 277-amino-acid polypeptide reads, in one-letter code: Phycobilisome rod-core linker polypeptide CpcG1 (277 aa).

One can recognise a PBS-linker domain in the interval 11–189; that stretch reads RTLDQRVVSY…YWRNKEISLS (179 aa).

It belongs to the phycobilisome linker protein family. In terms of assembly, the phycobilisome is a hemidiscoidal structure that is composed of two distinct substructures: a core complex and a number of rods radiating from the core.

Its subcellular location is the cellular thylakoid membrane. Its function is as follows. Rod-core linker protein required for attachment of phycocyanin to allophycocyanin in cores of phycobilisomes. In terms of biological role, linker polypeptides determine the state of aggregation and the location of the disk-shaped phycobiliprotein units within the phycobilisome and modulate their spectroscopic properties in order to mediate a directed and optimal energy transfer. This Thermosynechococcus vestitus (strain NIES-2133 / IAM M-273 / BP-1) protein is Phycobilisome rod-core linker polypeptide CpcG1 (cpcG1).